The sequence spans 281 residues: 2,3,4,5-tetrahydropyridine-2,6-dicarboxylate N-succinyltransferase (281 aa).

Residues Arg108 and Asp145 each coordinate substrate.

Belongs to the transferase hexapeptide repeat family. As to quaternary structure, homotrimer.

The protein resides in the cytoplasm. The enzyme catalyses (S)-2,3,4,5-tetrahydrodipicolinate + succinyl-CoA + H2O = (S)-2-succinylamino-6-oxoheptanedioate + CoA. It participates in amino-acid biosynthesis; L-lysine biosynthesis via DAP pathway; LL-2,6-diaminopimelate from (S)-tetrahydrodipicolinate (succinylase route): step 1/3. The polypeptide is 2,3,4,5-tetrahydropyridine-2,6-dicarboxylate N-succinyltransferase (Rhodopseudomonas palustris (strain ATCC BAA-98 / CGA009)).